Reading from the N-terminus, the 449-residue chain is MNAALNLWKDAHAKRLSQYCAVRVIGRVSAVRRILLECRIPSAKVGDLCEVSKADGSLLLAEIVGFTQECTLLSALGPPDGIQVGAPIRPLGVAHRIGVDDSLLGCVLDGFGRPLMGDCLGAFAGPEDRRTTLPVIADALPPTQRPRITRALPTGIRAIDSAILLGEGQRVGLFAGAGCGKTTLMAELARNMDCDVIVFGLIGERGRELREFLDHELDETLRRRSVLVCATSDRSSMERARAAFTATAIAEAFRARGQKVLLLLDSLTRFARAQREIGIASGEPLGRGGLPPSVYTLLPRLVERAGMSENGSITALYTVLIEQDSMNDPVADEVRSLLDGHIVLSRKLAERGHYPAIDVSASISRILSNVTGRKHQRANNRLRQLLAAYKQVEMLLRLGEYQAGADPVTDCAVQLNEAINAFLRQDLREPVPLQETLDRLLQLTSQLPE.

178–183 (GCGKTT) is a binding site for ATP.

The protein belongs to the ATPase alpha/beta chains family. T3SS ATPase subfamily. As to quaternary structure, the core secretion machinery of the T3SS is composed of approximately 20 different proteins, including cytoplasmic components, a base, an export apparatus and a needle. This subunit is part of the cytosolic complex. Forms homododecamers.

The protein resides in the cytoplasm. It catalyses the reaction ATP + H2O + cellular proteinSide 1 = ADP + phosphate + cellular proteinSide 2.. ATPase component of the type III secretion system (T3SS), also called injectisome, which is used to inject bacterial effector proteins into eukaryotic host cells. Acts as a molecular motor to provide the energy that is required for the export of proteins. Required for type III secretion apparatus (T3SA) formation, proper protein secretion, host cell invasion and virulence. May play a critical role in T3SS substrate recognition, disassembly of the effector/chaperone complex and unfolding of the effector in an ATP-dependent manner prior to secretion. The sequence is that of Type 3 secretion system ATPase from Pseudomonas syringae pv. syringae.